Reading from the N-terminus, the 367-residue chain is Heme A synthase 2 (367 aa).

5 consecutive transmembrane segments (helical) span residues 28–48, 114–134, 143–163, 180–200, and 221–241; these read MVAIWLFVSFALIVEMFGIGA, MWGRLLGFDFGVPLVWFLWTG, WLVTLFVLGGVQGLIGWWMVA, VHYCFATLLAIAVFATALTVL, and MAMGSIVLISIAIVAGTFLSG. Residue His-284 participates in heme binding. Helical transmembrane passes span 286–306, 314–334, and 340–360; these read LLGTVAAVGVLAAVVAAIRAD, AFLVMGALLIVQYILGVTTLV, and IGIVHQLNAVLLLAAAVWAWF. His-344 serves as a coordination point for heme.

The protein belongs to the COX15/CtaA family. Type 2 subfamily. Interacts with CtaB. Heme b serves as cofactor.

It localises to the cell membrane. The catalysed reaction is Fe(II)-heme o + 2 A + H2O = Fe(II)-heme a + 2 AH2. It participates in porphyrin-containing compound metabolism; heme A biosynthesis; heme A from heme O: step 1/1. Catalyzes the conversion of heme O to heme A by two successive hydroxylations of the methyl group at C8. The first hydroxylation forms heme I, the second hydroxylation results in an unstable dihydroxymethyl group, which spontaneously dehydrates, resulting in the formyl group of heme A. In Acidiphilium cryptum (strain JF-5), this protein is Heme A synthase 2.